A 350-amino-acid chain; its full sequence is Ribosomal RNA large subunit methyltransferase Cfr (350 aa).

E92 serves as the catalytic Proton acceptor. The Radical SAM core domain maps to E99–E333. An intrachain disulfide couples C106 to C338. [4Fe-4S] cluster contacts are provided by C113, C117, and C120. S-adenosyl-L-methionine contacts are provided by residues G159 to E160, S190, S213 to H215, and N293. C338 functions as the S-methylcysteine intermediate in the catalytic mechanism.

This sequence belongs to the radical SAM superfamily. RlmN family. Cfr subfamily. [4Fe-4S] cluster serves as cofactor.

The protein resides in the cytoplasm. It catalyses the reaction adenosine(2503) in 23S rRNA + 2 reduced [2Fe-2S]-[ferredoxin] + 2 S-adenosyl-L-methionine = 8-methyladenosine(2503) in 23S rRNA + 5'-deoxyadenosine + L-methionine + 2 oxidized [2Fe-2S]-[ferredoxin] + S-adenosyl-L-homocysteine. Functionally, specifically methylates position 8 of adenine 2503 in 23S rRNA. Confers resistance to some classes of antibiotics. This chain is Ribosomal RNA large subunit methyltransferase Cfr, found in Shouchella clausii (strain KSM-K16) (Alkalihalobacillus clausii).